The primary structure comprises 274 residues: Large ribosomal subunit protein uL2 (274 aa).

Residues 223-256 (VVMNPVDHPHGGGEGKTGEGRHPVDPWGNLTKGY) are disordered. Residues 229–246 (DHPHGGGEGKTGEGRHPV) show a composition bias toward basic and acidic residues.

It belongs to the universal ribosomal protein uL2 family. As to quaternary structure, part of the 50S ribosomal subunit. Forms a bridge to the 30S subunit in the 70S ribosome.

Functionally, one of the primary rRNA binding proteins. Required for association of the 30S and 50S subunits to form the 70S ribosome, for tRNA binding and peptide bond formation. It has been suggested to have peptidyltransferase activity; this is somewhat controversial. Makes several contacts with the 16S rRNA in the 70S ribosome. The polypeptide is Large ribosomal subunit protein uL2 (Albidiferax ferrireducens (strain ATCC BAA-621 / DSM 15236 / T118) (Rhodoferax ferrireducens)).